Consider the following 1154-residue polypeptide: BEACH domain-containing protein lvsF (1154 aa).

Disordered stretches follow at residues H92 to S123 and T139 to T167. Residues P145–Q158 are compositionally biased toward pro residues. Residues D289–V384 form the BEACH-type PH domain. The region spanning T389 to R697 is the BEACH domain. 3 disordered regions span residues S554–N575, N739–N762, and N779–N825. Composition is skewed to low complexity over residues N779 to N788 and N795 to E822. 7 WD repeats span residues L858–S897, L900–S939, G942–I980, D992–R1031, C1034–K1074, K1076–D1110, and S1119–Q1154.

The sequence is that of BEACH domain-containing protein lvsF (lvsF) from Dictyostelium discoideum (Social amoeba).